The following is a 14507-amino-acid chain: Mucin-16 (14507 aa).

Residues Met1–Leu17 are compositionally biased toward low complexity. The tract at residues Met1–Gly138 is disordered. Topologically, residues Met1–Pro14451 are extracellular. Polar residues-rich tracts occupy residues Thr35 to Gly46 and Pro56 to Gly138. Asn139 carries N-linked (GlcNAc...) asparagine glycosylation. Disordered stretches follow at residues Glu160–Trp180, Asp198–Ser229, Phe265–Ser287, Leu396–Val554, Val655–Met674, Ser695–Lys719, and Thr740–Leu888. Residues Thr166–Thr178 show a composition bias toward low complexity. Polar residues predominate over residues Pro212–Ser229. Low complexity-rich tracts occupy residues Ser276–Ser287 and Leu396–Leu413. Polar residues-rich tracts occupy residues Val414–Ser423, Gly431–Glu441, and Gly460–His478. N-linked (GlcNAc...) asparagine glycosylation occurs at Asn434. 2 stretches are compositionally biased toward low complexity: residues Thr485–Thr497 and Ala508–Ala525. A compositionally biased stretch (polar residues) spans Gln526–Met543. Composition is skewed to polar residues over residues Leu696 to Pro706, Thr740 to Thr780, Asn787 to Ser796, and Ser805 to Ile821. A glycan (N-linked (GlcNAc...) asparagine) is linked at Asn787. A compositionally biased stretch (low complexity) spans Pro823–Val846. Polar residues-rich tracts occupy residues Lys847 to Phe860 and Thr869 to Leu888. N-linked (GlcNAc...) asparagine glycans are attached at residues Asn930 and Asn957. Composition is skewed to polar residues over residues Ser949–Glu969, Gly1092–Gln1101, Gly1124–His1137, and Ser1301–Ser1317. Disordered stretches follow at residues Ser949–Ala981, Val1082–Gln1101, Pro1121–Thr1149, Ser1301–Ser1378, Leu1593–Ser1641, and Leu1704–Thr1757. Residues Thr1318–Thr1328 show a composition bias toward low complexity. Composition is skewed to polar residues over residues Ser1334 to Leu1347, Pro1368 to Ser1378, Gln1596 to Thr1613, Gly1621 to Asn1633, and Leu1704 to Met1745. An N-linked (GlcNAc...) asparagine glycan is attached at Asn1375. Asn1633 carries N-linked (GlcNAc...) asparagine glycosylation. Positions Ser1746–Thr1757 are enriched in low complexity. N-linked (GlcNAc...) asparagine glycosylation is found at Asn1840, Asn1877, and Asn1890. Residues Asp1846–Ile1908 are compositionally biased toward polar residues. 4 disordered regions span residues Asp1846 to Arg1930, Val2010 to Ala2033, Trp2064 to Ile2140, and Arg2153 to Thr2177. Low complexity-rich tracts occupy residues Ser2019–Ala2033 and Trp2064–Ser2085. The span at His2111–Ser2132 shows a compositional bias: polar residues. Asn2345 and Asn2375 each carry an N-linked (GlcNAc...) asparagine glycan. Disordered stretches follow at residues Pro2393–Ile2455 and Ser2566–Ala2591. Composition is skewed to low complexity over residues Thr2417–Ser2429 and Ser2566–Ser2583. N-linked (GlcNAc...) asparagine glycosylation is present at Asn2737. Disordered regions lie at residues Thr2789–Asn2822, Thr2838–Ile2885, Asp2901–Ser3006, Thr3019–Lys3052, Thr3083–Ile3148, Ser3172–Thr3235, Ala3251–Asn3276, Gly3299–Thr3392, Thr3415–Ser3436, and Val3462–Pro3491. The segment covering Ser2803–Leu2819 has biased composition (polar residues). Residues Ser2864–Ser2875 are compositionally biased toward low complexity. 2 stretches are compositionally biased toward polar residues: residues Leu2876–Ile2885 and Asp2901–Pro2918. Residues Asp2919–Lys2931 are compositionally biased toward low complexity. The span at Met2942–Pro2968 shows a compositional bias: polar residues. Residues Thr3019–Ser3035 show a composition bias toward low complexity. The segment covering Ser3041–Lys3052 has biased composition (polar residues). N-linked (GlcNAc...) asparagine glycosylation occurs at Asn3085. The segment covering Thr3107 to Thr3116 has biased composition (low complexity). Composition is skewed to polar residues over residues Pro3117–Glu3132 and Ser3172–Trp3181. Residue Asn3178 is glycosylated (N-linked (GlcNAc...) asparagine). Over residues Thr3188–Pro3200 the composition is skewed to low complexity. Polar residues-rich tracts occupy residues Glu3201–Pro3214 and Ala3251–His3261. Over residues Pro3263–Thr3274 the composition is skewed to low complexity. Polar residues-rich tracts occupy residues Gly3299 to Met3342 and Val3360 to Thr3383. 2 stretches are compositionally biased toward low complexity: residues Ser3424 to Ser3436 and Pro3477 to Pro3491. Asn3501 carries an N-linked (GlcNAc...) asparagine glycan. A compositionally biased stretch (low complexity) spans Ile3538–Pro3555. Disordered stretches follow at residues Ile3538–Ala3588, Thr3644–Thr3672, Arg3794–Pro3829, Ala3843–Ala3879, Leu3914–Val3982, Met4024–Arg4056, Ala4094–Thr4121, and Phe4138–His4166. 2 stretches are compositionally biased toward polar residues: residues Gln3812–His3824 and Ala3848–Ser3868. Residues Ser3916–Ser3927 are compositionally biased toward low complexity. A compositionally biased stretch (polar residues) spans Pro3946–Val3982. Low complexity predominate over residues Thr4026–Thr4041. Positions Met4095–Thr4121 are enriched in polar residues. Residues Ser4152–Pro4164 show a composition bias toward low complexity. N-linked (GlcNAc...) asparagine glycosylation is found at Asn4220, Asn4498, Asn4606, Asn4613, and Asn4624. 3 disordered regions span residues Val4728–Gln4748, His4845–Ser4961, and Val5026–Ser5066. Polar residues predominate over residues Lys4856–Ile4876. A glycan (N-linked (GlcNAc...) asparagine) is linked at Asn4861. Composition is skewed to low complexity over residues Pro4877–Thr4914 and Thr4924–Ser4939. Polar residues-rich tracts occupy residues Asp4944–Ser4961 and Val5026–Thr5037. Low complexity predominate over residues Ser5038–Pro5047. Residues Ala5048–Leu5059 are compositionally biased toward polar residues. N-linked (GlcNAc...) asparagine glycans are attached at residues Asn5096, Asn5131, and Asn5228. 3 disordered regions span residues Val5128 to Lys5149, Glu5221 to Thr5249, and Thr5271 to Gln5303. The span at Glu5221–Ser5234 shows a compositional bias: polar residues. Over residues Ser5280–Ser5293 the composition is skewed to low complexity. Residues Gln5294 to Gln5303 are compositionally biased toward polar residues. Asn5320 carries an N-linked (GlcNAc...) asparagine glycan. 7 disordered regions span residues Pro5328–Val5365, Gly5381–His5400, Asn5426–Ala5507, Ala5519–Thr5538, Pro5624–Pro5654, Leu5675–Glu5696, and Ile5727–Ser5747. Low complexity-rich tracts occupy residues Ser5333–Val5365 and Gly5381–Pro5393. N-linked (GlcNAc...) asparagine glycosylation occurs at Asn5394. 2 stretches are compositionally biased toward polar residues: residues Asn5426–Leu5441 and Ser5447–Leu5485. Asn5470 is a glycosylation site (N-linked (GlcNAc...) asparagine). 4 stretches are compositionally biased toward low complexity: residues Ser5495–Thr5504, Ser5520–Ser5532, Ser5633–Pro5654, and Leu5675–Pro5688. Asn5689 carries N-linked (GlcNAc...) asparagine glycosylation. The span at Ile5727–Pro5737 shows a compositional bias: polar residues. N-linked (GlcNAc...) asparagine glycosylation occurs at Asn5863. 2 disordered regions span residues Ser5882 to Val5931 and Ser6054 to Leu6078. Over residues Thr5903–Gln5916 the composition is skewed to polar residues. The span at Ser5917–Ser5928 shows a compositional bias: low complexity. Positions Ser6054–Thr6063 are enriched in polar residues. Asn6088 carries N-linked (GlcNAc...) asparagine glycosylation. Disordered stretches follow at residues Pro6122–Ile6149, Asn6219–Val6251, Ser6399–Thr6425, Thr6438–Thr6459, Ile6497–Pro6545, and Thr6682–Ser6714. 3 stretches are compositionally biased toward low complexity: residues Ser6134–Ile6149, Pro6226–Val6251, and Ser6399–Ser6410. 2 stretches are compositionally biased toward polar residues: residues Ile6411 to Thr6425 and Ile6445 to Thr6459. Residues Thr6500–Pro6523 show a composition bias toward low complexity. Polar residues-rich tracts occupy residues Leu6530–Pro6545 and Thr6683–Thr6699. N-linked (GlcNAc...) asparagine glycosylation is present at Asn6732. 3 disordered regions span residues Ser6800 to Lys6822, Thr6845 to His6865, and Thr6886 to Thr6939. A compositionally biased stretch (low complexity) spans Thr6848–Ser6864. N-linked (GlcNAc...) asparagine glycosylation is present at Asn6859. The span at Thr6886–Leu6905 shows a compositional bias: polar residues. Low complexity predominate over residues Thr6919–Thr6938. Asn6961 carries an N-linked (GlcNAc...) asparagine glycan. 14 disordered regions span residues Ala6981 to Val7004, Met7028 to Ser7107, Thr7143 to Ala7208, Ser7279 to Glu7302, Glu7320 to Thr7345, Gln7360 to Thr7427, Leu7437 to Val7456, Glu7463 to Lys7503, Ser7527 to Thr7553, Thr7577 to Gln7597, Ala7726 to Ser7782, Leu7825 to Ser7849, His7908 to Thr7927, and Pro7970 to Pro8000. Over residues Met7028 to Gly7038 the composition is skewed to polar residues. Low complexity predominate over residues Ser7039–Gln7055. The segment covering Lys7057–Met7075 has biased composition (polar residues). The segment covering Ser7086–Thr7105 has biased composition (low complexity). Over residues Gly7166–Leu7200 the composition is skewed to polar residues. The span at Ser7279–Thr7298 shows a compositional bias: low complexity. 3 stretches are compositionally biased toward polar residues: residues Ser7322–Thr7345, Gln7360–Val7371, and Ser7390–Ile7402. Low complexity-rich tracts occupy residues Ser7403–Thr7427 and Ala7439–Ser7455. The span at Phe7474–Thr7484 shows a compositional bias: polar residues. Over residues Ser7485–Ser7494 the composition is skewed to low complexity. Residues Gly7733 to Thr7749 are compositionally biased toward low complexity. The segment covering Ser7750–Ala7765 has biased composition (basic and acidic residues). The span at Pro7768–Ser7782 shows a compositional bias: polar residues. Composition is skewed to low complexity over residues Glu7835–Thr7846, Thr7915–Thr7927, and Ser7973–Pro8000. Asn8029 and Asn8055 each carry an N-linked (GlcNAc...) asparagine glycan. Disordered stretches follow at residues Glu8042–Ser8078, Ile8111–Leu8134, Gly8312–Glu8331, Thr8342–Gly8389, Thr8411–Asp8472, Met8604–Ala8624, Ser8674–Ser8741, and Thr8775–Pro8880. The segment covering Pro8052–Ser8078 has biased composition (polar residues). Residues Thr8319–Thr8328 are compositionally biased toward low complexity. Asn8324 carries an N-linked (GlcNAc...) asparagine glycan. Over residues Met8345–Gly8389 the composition is skewed to polar residues. A compositionally biased stretch (low complexity) spans Thr8607 to Ala8624. Residues Asn8618 and Asn8684 are each glycosylated (N-linked (GlcNAc...) asparagine). 2 stretches are compositionally biased toward polar residues: residues Ser8674–Val8740 and Gly8781–Ala8810. A compositionally biased stretch (low complexity) spans Thr8850–Pro8880. N-linked (GlcNAc...) asparagine glycosylation occurs at Asn8913. 2 disordered regions span residues Glu8995–Lys9018 and Ser9147–His9168. Asn9202 carries an N-linked (GlcNAc...) asparagine glycan. The segment covering Ser9294 to Thr9307 has biased composition (low complexity). Positions Ser9294–Pro9460 are disordered. Composition is skewed to polar residues over residues Val9308–Leu9357 and Ser9374–Met9412. The segment covering Ser9431–Pro9460 has biased composition (low complexity). Residue Asn9493 is glycosylated (N-linked (GlcNAc...) asparagine). 4 disordered regions span residues Ala9611 to Thr9635, Ser9726 to Ser9753, Val9771 to Val9791, and Thr9869 to Ser9890. The segment covering Met9621–Thr9635 has biased composition (polar residues). Composition is skewed to low complexity over residues Thr9774–Ser9790 and Glu9881–Ser9890. Asn9785 is a glycosylation site (N-linked (GlcNAc...) asparagine). 2 N-linked (GlcNAc...) asparagine glycosylation sites follow: Asn10075 and Asn10173. 2 disordered regions span residues Ser10175–Ser10218 and Thr10445–Thr10469. A compositionally biased stretch (low complexity) spans Thr10178–Thr10193. The span at His10194–Pro10212 shows a compositional bias: polar residues. N-linked (GlcNAc...) asparagine glycosylation occurs at Asn10510. Over residues Ser10544–Ser10573 the composition is skewed to polar residues. 2 disordered regions span residues Ser10544–Ser10590 and Glu10689–Glu10719. Asn10700 carries an N-linked (GlcNAc...) asparagine glycan. The span at Ala10708–Glu10719 shows a compositional bias: polar residues. The N-linked (GlcNAc...) asparagine glycan is linked to Asn10749. Over residues Thr10849 to Glu10860 the composition is skewed to polar residues. 3 disordered regions span residues Thr10849–Thr10872, Leu10898–Val10926, and Leu11003–Pro11036. Over residues Ser10861 to Thr10872 the composition is skewed to low complexity. Over residues Leu11003–Ser11018 the composition is skewed to low complexity. A glycan (N-linked (GlcNAc...) asparagine) is linked at Asn11053. Residues Ser11072–Pro11092 are disordered. Asn11224 and Asn11263 each carry an N-linked (GlcNAc...) asparagine glycan. 2 stretches are compositionally biased toward polar residues: residues His11269 to Phe11284 and Ser11358 to Thr11381. 6 disordered regions span residues His11269–Ala11301, Ser11358–Val11400, Lys11508–Thr11537, Glu11583–Arg11724, Ser11836–Met11861, and Gln11913–Thr11937. The N-linked (GlcNAc...) asparagine glycan is linked to Asn11367. Polar residues-rich tracts occupy residues Glu11583–Asn11594, Val11631–Pro11651, and Thr11658–Phe11672. An N-linked (GlcNAc...) asparagine glycan is attached at Asn11594. The segment covering Pro11700–Pro11717 has biased composition (low complexity). Polar residues-rich tracts occupy residues Pro11849–Met11861 and Gln11913–Ser11928. 12 tandem repeats follow at residues Ala12067–Thr12223, Thr12224–Met12381, Ala12382–Ala12537, Thr12538–Thr12692, Thr12693–Thr12848, Ser12849–Thr13004, Thr13005–Thr13160, Thr13161–Thr13316, Ala13317–Met13472, Thr13473–Ser13628, Ala13629–Ser13784, and Ala13785–Ala13939. Residues Ala12067 to Ala13939 are 12 X approximate tandem repeats. The SEA 1 domain maps to Phe12072–His12193. Asn12079, Asn12100, and Asn12116 each carry an N-linked (GlcNAc...) asparagine glycan. Cys12126 and Cys12146 are disulfide-bonded. An N-linked (GlcNAc...) asparagine glycan is attached at Asn12168. Residues Ser12196–Gly12226 form a disordered region. One can recognise an SEA 2 domain in the interval Leu12228–His12349. N-linked (GlcNAc...) asparagine glycans are attached at residues Asn12235 and Asn12272. An intrachain disulfide couples Cys12282 to Cys12302. Residues Val12353 to Ser12376 form a disordered region. SEA domains are found at residues Leu12386–His12507, Leu12542–His12663, and Leu12697–His12818. N-linked (GlcNAc...) asparagine glycosylation is found at Asn12393, Asn12414, and Asn12430. Cys12440 and Cys12460 are joined by a disulfide. N-linked (GlcNAc...) asparagine glycans are attached at residues Asn12549, Asn12570, and Asn12586. A disulfide bridge connects residues Cys12596 and Cys12616. 3 N-linked (GlcNAc...) asparagine glycosylation sites follow: Asn12704, Asn12725, and Asn12741. Cys12751 and Cys12771 are joined by a disulfide. Residues Gln12819 to Asp12834 show a composition bias toward polar residues. Residues Gln12819 to Ser12849 form a disordered region. Asn12824 carries N-linked (GlcNAc...) asparagine glycosylation. The span at Leu12835–Ser12849 shows a compositional bias: low complexity. The region spanning Leu12853–His12974 is the SEA 6 domain. N-linked (GlcNAc...) asparagine glycosylation is found at Asn12860, Asn12881, and Asn12897. Cys12907 and Cys12927 are disulfide-bonded. Polar residues predominate over residues Val12978–Asp12990. The tract at residues Val12978 to Pro13003 is disordered. Residues Leu12991–Pro13003 are compositionally biased toward low complexity. SEA domains lie at Leu13009–His13130 and Leu13165–Gln13286. Residues Asn13016, Asn13037, and Asn13053 are each glycosylated (N-linked (GlcNAc...) asparagine). The cysteines at positions 13063 and 13083 are disulfide-linked. Asn13172 and Asn13193 each carry an N-linked (GlcNAc...) asparagine glycan. Cys13219 and Cys13239 are joined by a disulfide. A compositionally biased stretch (polar residues) spans Pro13291 to Pro13313. The interval Pro13291 to Ala13317 is disordered. SEA domains follow at residues Val13321–His13442 and Leu13477–Gln13598. N-linked (GlcNAc...) asparagine glycosylation is found at Asn13328, Asn13349, and Asn13365. The cysteines at positions 13375 and 13395 are disulfide-linked. 3 N-linked (GlcNAc...) asparagine glycosylation sites follow: Asn13484, Asn13505, and Asn13521. Cys13531 and Cys13551 are disulfide-bonded. Residues Pro13603–Pro13621 show a composition bias toward polar residues. Residues Pro13603–Pro13625 are disordered. 4 consecutive SEA domains span residues Leu13633–His13754, Leu13789–His13909, Ser13922–Glu14043, and His14073–Pro14193. N-linked (GlcNAc...) asparagine glycosylation is found at Asn13640 and Asn13661. The cysteines at positions 13687 and 13707 are disulfide-linked. Asn13733, Asn13744, Asn13796, Asn13816, Asn13832, Asn13929, and Asn13950 each carry an N-linked (GlcNAc...) asparagine glycan. An intrachain disulfide couples Cys13976 to Cys13996. 2 N-linked (GlcNAc...) asparagine glycosylation sites follow: Asn14080 and Asn14100. An intrachain disulfide couples Cys14126 to Cys14146. N-linked (GlcNAc...) asparagine glycosylation is found at Asn14195, Asn14212, Asn14254, Asn14287, Asn14326, and Asn14363. SEA domains are found at residues Ile14198–Ser14309 and Ser14319–Pro14438. Residues Cys14373 and Cys14393 are joined by a disulfide bond. N-linked (GlcNAc...) asparagine glycans are attached at residues Asn14417 and Asn14423. Residues Phe14452–Cys14472 form a helical membrane-spanning segment. The Cytoplasmic portion of the chain corresponds to Gly14473–Gln14507.

In terms of assembly, binds to MSLN. Binding to MSLN mediates heterotypic cell adhesion. This may contribute to the metastasis of ovarian cancer to the peritoneum by initiating cell attachment to the mesothelial epithelium via binding to MSLN. Heavily O-glycosylated; expresses both type 1 and type 2 core glycans. In terms of processing, heavily N-glycosylated; expresses primarily high mannose and complex bisecting type N-linked glycans. Post-translationally, may be phosphorylated. Phosphorylation of the intracellular C-terminal domain may induce proteolytic cleavage and the liberation of the extracellular domain into the extracellular space. May contain numerous disulfide bridges. Association of several molecules of the secreted form may occur through interchain disulfide bridges providing an extraordinarily large gel-like matrix in the extracellular space or in the lumen of secretory ducts. As to expression, expressed in corneal and conjunctival epithelia (at protein level). Overexpressed in ovarian carcinomas and ovarian low malignant potential (LMP) tumors as compared to the expression in normal ovarian tissue and ovarian adenomas.

It is found in the cell membrane. It localises to the secreted. The protein localises to the extracellular space. In terms of biological role, thought to provide a protective, lubricating barrier against particles and infectious agents at mucosal surfaces. In Homo sapiens (Human), this protein is Mucin-16.